The primary structure comprises 58 residues: Photosystem II reaction center protein K (58 aa).

Residues 1 to 21 (MTVSYSIYLENSLHFGDALLA) constitute a propeptide that is removed on maturation. The chain crosses the membrane as a helical span at residues 29–49 (IFDPIVDVMPVIPVFFLLLAF).

It belongs to the PsbK family. As to quaternary structure, PSII is composed of 1 copy each of membrane proteins PsbA, PsbB, PsbC, PsbD, PsbE, PsbF, PsbH, PsbI, PsbJ, PsbK, PsbL, PsbM, PsbT, PsbX, PsbY, PsbZ, Psb30/Ycf12, at least 3 peripheral proteins of the oxygen-evolving complex and a large number of cofactors. It forms dimeric complexes.

The protein resides in the plastid. Its subcellular location is the chloroplast thylakoid membrane. In terms of biological role, one of the components of the core complex of photosystem II (PSII). PSII is a light-driven water:plastoquinone oxidoreductase that uses light energy to abstract electrons from H(2)O, generating O(2) and a proton gradient subsequently used for ATP formation. It consists of a core antenna complex that captures photons, and an electron transfer chain that converts photonic excitation into a charge separation. The sequence is that of Photosystem II reaction center protein K from Adiantum capillus-veneris (Maidenhair fern).